A 147-amino-acid chain; its full sequence is Proteinase inhibitor type-2 (147 aa).

The N-terminal stretch at 1–25 (MAVHKEVSFVAYLLIVLGMFLYVDA) is a signal peptide. Tandem repeats lie at residues 25–81 (ALGC…DPKN) and 82–141 (PKAC…DEPK). 8 cysteine pairs are disulfide-bonded: Cys28–Cys116, Cys32–Cys112, Cys40–Cys122, Cys52–Cys89, Cys55–Cys73, Cys56–Cys85, Cys62–Cys98, and Cys115–Cys133.

Belongs to the protease inhibitor I20 (potato type II proteinase inhibitor) family.

In Solanum tuberosum (Potato), this protein is Proteinase inhibitor type-2.